The chain runs to 97 residues: YcgL domain-containing protein PSPTO_3921 (97 aa).

In terms of domain architecture, YcgL spans 3-87; sequence RICSIYRSPK…AEDEYIEHLP (85 aa).

This chain is YcgL domain-containing protein PSPTO_3921, found in Pseudomonas syringae pv. tomato (strain ATCC BAA-871 / DC3000).